Here is a 457-residue protein sequence, read N- to C-terminus: Ribosomal protein uS12 methylthiotransferase RimO (457 aa).

The 111-residue stretch at 6–116 (PKVGFVSLGC…VMEAVHAALP (111 aa)) folds into the MTTase N-terminal domain. Residues Cys-15, Cys-51, Cys-80, Cys-147, Cys-151, and Cys-154 each contribute to the [4Fe-4S] cluster site. In terms of domain architecture, Radical SAM core spans 133 to 371 (LTPRHYAYLK…AKQAQISALR (239 aa)). One can recognise a TRAM domain in the interval 373–441 (ESKIGSVQQC…EHDLFGDALP (69 aa)).

It belongs to the methylthiotransferase family. RimO subfamily. It depends on [4Fe-4S] cluster as a cofactor.

The protein localises to the cytoplasm. The catalysed reaction is L-aspartate(89)-[ribosomal protein uS12]-hydrogen + (sulfur carrier)-SH + AH2 + 2 S-adenosyl-L-methionine = 3-methylsulfanyl-L-aspartate(89)-[ribosomal protein uS12]-hydrogen + (sulfur carrier)-H + 5'-deoxyadenosine + L-methionine + A + S-adenosyl-L-homocysteine + 2 H(+). Catalyzes the methylthiolation of an aspartic acid residue of ribosomal protein uS12. In Xanthomonas axonopodis pv. citri (strain 306), this protein is Ribosomal protein uS12 methylthiotransferase RimO.